The sequence spans 131 residues: Large ribosomal subunit protein bL17 (131 aa).

This sequence belongs to the bacterial ribosomal protein bL17 family. In terms of assembly, part of the 50S ribosomal subunit. Contacts protein L32.

The chain is Large ribosomal subunit protein bL17 from Janthinobacterium sp. (strain Marseille) (Minibacterium massiliensis).